The primary structure comprises 984 residues: Probable beta-galactosidase C (984 aa).

An N-terminal signal peptide occupies residues 1 to 19; the sequence is MRLLNIFTTLCLLLWSGAA. Positions 78, 123, 124, 125, and 183 each coordinate substrate. Catalysis depends on glutamate 184, which acts as the Proton donor. Residue tyrosine 247 participates in substrate binding. A disulfide bridge connects residues cysteine 253 and cysteine 300. Asparagine 272 carries N-linked (GlcNAc...) asparagine glycosylation. Glutamate 283 functions as the Nucleophile in the catalytic mechanism. Position 349 (tyrosine 349) interacts with substrate. Asparagine 387, asparagine 433, asparagine 462, asparagine 516, asparagine 583, asparagine 599, asparagine 673, asparagine 716, asparagine 756, asparagine 860, and asparagine 870 each carry an N-linked (GlcNAc...) asparagine glycan.

This sequence belongs to the glycosyl hydrolase 35 family.

It localises to the secreted. It catalyses the reaction Hydrolysis of terminal non-reducing beta-D-galactose residues in beta-D-galactosides.. In terms of biological role, cleaves beta-linked terminal galactosyl residues from gangliosides, glycoproteins, and glycosaminoglycans. The protein is Probable beta-galactosidase C (lacC) of Sclerotinia sclerotiorum (strain ATCC 18683 / 1980 / Ss-1) (White mold).